We begin with the raw amino-acid sequence, 294 residues long: Small ribosomal subunit protein uS2 (294 aa).

The segment covering 261-274 has biased composition (basic and acidic residues); sequence MDEDADSKKSKAEE. The disordered stretch occupies residues 261–294; sequence MDEDADSKKSKAEEPVIPTAEEPAITTIEVDQNE.

This sequence belongs to the universal ribosomal protein uS2 family.

The polypeptide is Small ribosomal subunit protein uS2 (Leptospira borgpetersenii serovar Hardjo-bovis (strain JB197)).